A 179-amino-acid polypeptide reads, in one-letter code: ATP synthase subunit delta (179 aa).

It belongs to the ATPase delta chain family. In terms of assembly, F-type ATPases have 2 components, F(1) - the catalytic core - and F(0) - the membrane proton channel. F(1) has five subunits: alpha(3), beta(3), gamma(1), delta(1), epsilon(1). F(0) has three main subunits: a(1), b(2) and c(10-14). The alpha and beta chains form an alternating ring which encloses part of the gamma chain. F(1) is attached to F(0) by a central stalk formed by the gamma and epsilon chains, while a peripheral stalk is formed by the delta and b chains.

It is found in the cell inner membrane. Functionally, f(1)F(0) ATP synthase produces ATP from ADP in the presence of a proton or sodium gradient. F-type ATPases consist of two structural domains, F(1) containing the extramembraneous catalytic core and F(0) containing the membrane proton channel, linked together by a central stalk and a peripheral stalk. During catalysis, ATP synthesis in the catalytic domain of F(1) is coupled via a rotary mechanism of the central stalk subunits to proton translocation. This protein is part of the stalk that links CF(0) to CF(1). It either transmits conformational changes from CF(0) to CF(1) or is implicated in proton conduction. The polypeptide is ATP synthase subunit delta (Acidithiobacillus ferridurans).